We begin with the raw amino-acid sequence, 166 residues long: Outer membrane protein assembly factor BamE (166 aa).

Residues 1-18 form the signal peptide; that stretch reads MKRTVFPLAVAAALTLTA. Cysteine 19 is lipidated: N-palmitoyl cysteine. Cysteine 19 carries S-diacylglycerol cysteine lipidation. The disordered stretch occupies residues 143–166; it reads LFSNDDSGEMPVKPESKPSDLLNE.

The protein belongs to the BamE family. Part of the Bam complex.

The protein resides in the cell outer membrane. Its function is as follows. Part of the outer membrane protein assembly complex, which is involved in assembly and insertion of beta-barrel proteins into the outer membrane. This Methylomonas methanica (strain DSM 25384 / MC09) protein is Outer membrane protein assembly factor BamE.